Reading from the N-terminus, the 702-residue chain is Elongation factor G (702 aa).

The tr-type G domain maps to 8–290; that stretch reads TRYRNIGISA…AVIEYLPAPT (283 aa). Residues 17 to 24, 88 to 92, and 142 to 145 contribute to the GTP site; these read AHIDAGKT, DTPGH, and NKMD.

The protein belongs to the TRAFAC class translation factor GTPase superfamily. Classic translation factor GTPase family. EF-G/EF-2 subfamily.

The protein resides in the cytoplasm. Catalyzes the GTP-dependent ribosomal translocation step during translation elongation. During this step, the ribosome changes from the pre-translocational (PRE) to the post-translocational (POST) state as the newly formed A-site-bound peptidyl-tRNA and P-site-bound deacylated tRNA move to the P and E sites, respectively. Catalyzes the coordinated movement of the two tRNA molecules, the mRNA and conformational changes in the ribosome. The chain is Elongation factor G from Erwinia tasmaniensis (strain DSM 17950 / CFBP 7177 / CIP 109463 / NCPPB 4357 / Et1/99).